The sequence spans 466 residues: ATP synthase subunit beta (466 aa).

153-160 (GGAGVGKT) is an ATP binding site.

This sequence belongs to the ATPase alpha/beta chains family. F-type ATPases have 2 components, CF(1) - the catalytic core - and CF(0) - the membrane proton channel. CF(1) has five subunits: alpha(3), beta(3), gamma(1), delta(1), epsilon(1). CF(0) has three main subunits: a(1), b(2) and c(9-12). The alpha and beta chains form an alternating ring which encloses part of the gamma chain. CF(1) is attached to CF(0) by a central stalk formed by the gamma and epsilon chains, while a peripheral stalk is formed by the delta and b chains.

It is found in the cell membrane. The catalysed reaction is ATP + H2O + 4 H(+)(in) = ADP + phosphate + 5 H(+)(out). Functionally, produces ATP from ADP in the presence of a proton gradient across the membrane. The catalytic sites are hosted primarily by the beta subunits. The protein is ATP synthase subunit beta of Leuconostoc mesenteroides subsp. mesenteroides (strain ATCC 8293 / DSM 20343 / BCRC 11652 / CCM 1803 / JCM 6124 / NCDO 523 / NBRC 100496 / NCIMB 8023 / NCTC 12954 / NRRL B-1118 / 37Y).